A 580-amino-acid chain; its full sequence is Arginine--tRNA ligase (580 aa).

Residues 123–133 (PNLAKEMHVGH) carry the 'HIGH' region motif.

This sequence belongs to the class-I aminoacyl-tRNA synthetase family. Monomer.

The protein localises to the cytoplasm. The catalysed reaction is tRNA(Arg) + L-arginine + ATP = L-arginyl-tRNA(Arg) + AMP + diphosphate. This Pseudoalteromonas translucida (strain TAC 125) protein is Arginine--tRNA ligase.